The chain runs to 173 residues: dCTP deaminase, dUMP-forming (173 aa).

DCTP-binding positions include 93–98 (RSSTGR), Asp111, 119–121 (TLE), Gln138, and Tyr151. Catalysis depends on Glu121, which acts as the Proton donor/acceptor.

The protein belongs to the dCTP deaminase family. As to quaternary structure, homotrimer.

The enzyme catalyses dCTP + 2 H2O = dUMP + NH4(+) + diphosphate. Its pathway is pyrimidine metabolism; dUMP biosynthesis; dUMP from dCTP: step 1/1. Functionally, bifunctional enzyme that catalyzes both the deamination of dCTP to dUTP and the hydrolysis of dUTP to dUMP without releasing the toxic dUTP intermediate. This Clostridium botulinum (strain Eklund 17B / Type B) protein is dCTP deaminase, dUMP-forming.